We begin with the raw amino-acid sequence, 182 residues long: UPF0397 protein SPG_0438 (182 aa).

A run of 5 helical transmembrane segments spans residues 10–30, 46–66, 73–93, 109–129, and 148–168; these read VVAV…NIPT, LLSI…GHAI, YGLW…VGLF, ILIF…VLAP, and IVAG…LLLA.

The protein belongs to the UPF0397 family.

The protein localises to the cell membrane. The sequence is that of UPF0397 protein SPG_0438 from Streptococcus pneumoniae serotype 19F (strain G54).